The sequence spans 146 residues: Hemoglobin subunit beta (146 aa).

Positions Gln2–His146 constitute a Globin domain. The heme b site is built by His63 and His92.

Belongs to the globin family. Heterotetramer of two alpha chains and two beta chains. Red blood cells.

In terms of biological role, involved in oxygen transport from the lung to the various peripheral tissues. This is Hemoglobin subunit beta (hbb) from Artedidraco orianae (Barbeled plunderfish).